The primary structure comprises 641 residues: Sodium-dependent nutrient amino acid transporter 1 (641 aa).

Over residues 1-21 (MELKNIEQQPQLQNGNGTATE) the composition is skewed to polar residues. The tract at residues 1 to 37 (MELKNIEQQPQLQNGNGTATENNEKGEQKPTEGGERT) is disordered. The Cytoplasmic segment spans residues 1-38 (MELKNIEQQPQLQNGNGTATENNEKGEQKPTEGGERTN). Positions 22 to 35 (NNEKGEQKPTEGGE) are enriched in basic and acidic residues. A run of 3 helical transmembrane segments spans residues 39 to 59 (WGNG…LGNV), 72 to 92 (GAFL…MYYL), and 125 to 145 (TVCI…YLFV). Residues asparagine 181, asparagine 190, and asparagine 198 are each glycosylated (N-linked (GlcNAc...) asparagine). 9 helical membrane passes run 229–249 (PDWK…LVIM), 258–278 (AAYF…GRAV), 307–327 (AVVQ…MFAS), 341–361 (IVTT…FAIL), 401–421 (LFSV…IVAL), 441–461 (VALV…TPGG), 474–494 (TYVV…IYGL), 516–536 (CWSF…MATI), and 552–572 (IAGW…GIWY).

The protein belongs to the sodium:neurotransmitter symporter (SNF) (TC 2.A.22) family.

It localises to the membrane. Functionally, unusual broad substrate spectrum amino acid:sodium cotransporter that promotes absorption of the D isomers of essential amino acids. Neutral amino acids are the preferred substrates, especially methionine and phenylalanine. The protein is Sodium-dependent nutrient amino acid transporter 1 of Drosophila willistoni (Fruit fly).